The following is a 546-amino-acid chain: 2-isopropylmalate synthase (546 aa).

The Pyruvate carboxyltransferase domain occupies 8–271; it reads ILIFDTTLRD…NKFFNRNSDS (264 aa). 4 residues coordinate Mn(2+): Asp17, His208, His210, and Asn244. Residues 408 to 546 form a regulatory domain region; it reads QLSLVQVSCG…DKTLLSNPGK (139 aa).

Belongs to the alpha-IPM synthase/homocitrate synthase family. LeuA type 1 subfamily. In terms of assembly, homodimer. The cofactor is Mn(2+).

The protein localises to the cytoplasm. It catalyses the reaction 3-methyl-2-oxobutanoate + acetyl-CoA + H2O = (2S)-2-isopropylmalate + CoA + H(+). It participates in amino-acid biosynthesis; L-leucine biosynthesis; L-leucine from 3-methyl-2-oxobutanoate: step 1/4. Its function is as follows. Catalyzes the condensation of the acetyl group of acetyl-CoA with 3-methyl-2-oxobutanoate (2-ketoisovalerate) to form 3-carboxy-3-hydroxy-4-methylpentanoate (2-isopropylmalate). This Prochlorococcus marinus (strain MIT 9215) protein is 2-isopropylmalate synthase.